A 683-amino-acid polypeptide reads, in one-letter code: Cytoskeleton-associated protein 2 (683 aa).

Disordered regions lie at residues 1–28 (MSTP…QRRQ) and 153–175 (NSKK…KKPV). A phosphoserine mark is found at S178 and S190. Disordered stretches follow at residues 214 to 236 (KATK…SSNM) and 336 to 403 (EKSE…EKPV). A compositionally biased stretch (polar residues) spans 219-236 (QPVNTSSVTVKSNRSSNM). Basic and acidic residues-rich tracts occupy residues 336-345 (EKSEPVDQRR) and 362-376 (ETSE…EWKA). The residue at position 534 (S534) is a Phosphoserine. Residues T579 and T582 each carry the phosphothreonine modification. S595 is subject to Phosphoserine. Residues T596 and T597 each carry the phosphothreonine modification. Phosphotyrosine is present on Y599. S602 bears the Phosphoserine mark.

This sequence belongs to the CKAP2 family. Associates with alpha- and beta-tubulins. In terms of tissue distribution, abundant in testis, thymus, and in tumor derived cell lines, while barely detectable in liver, prostate, and kidney.

It is found in the cytoplasm. The protein localises to the cytoskeleton. The protein resides in the spindle. It localises to the spindle pole. Functionally, possesses microtubule stabilizing properties. Involved in regulating aneuploidy, cell cycling, and cell death in a p53/TP53-dependent manner. This is Cytoskeleton-associated protein 2 from Homo sapiens (Human).